Here is a 363-residue protein sequence, read N- to C-terminus: Fructose-bisphosphate aldolase C (363 aa).

Tyrosine 5 is subject to Phosphotyrosine. Phosphoserine occurs at positions 36, 39, and 45. Arginine 56 contributes to the substrate binding site. Lysine 111 carries the N6-acetyllysine modification. Lysine 147 is a substrate binding site. Residue glutamate 188 is the Proton acceptor of the active site. Lysine 230 serves as the catalytic Schiff-base intermediate with dihydroxyacetone-P.

The protein belongs to the class I fructose-bisphosphate aldolase family. Homotetramer. Interacts with ATP6V1E1. As to expression, expressed exclusively in Purkinje cells in bands running from anterior to posterior across most of the cerebellum. Expressed at higher levels in the brains of BSE-infected animals.

The catalysed reaction is beta-D-fructose 1,6-bisphosphate = D-glyceraldehyde 3-phosphate + dihydroxyacetone phosphate. It participates in carbohydrate degradation; glycolysis; D-glyceraldehyde 3-phosphate and glycerone phosphate from D-glucose: step 4/4. This Mus musculus (Mouse) protein is Fructose-bisphosphate aldolase C (Aldoc).